Consider the following 279-residue polypeptide: Methyltransferase trt5 (279 aa).

S-adenosyl-L-methionine contacts are provided by residues 124 to 125 and 152 to 153; these read DI and DV.

Belongs to the class I-like SAM-binding methyltransferase superfamily. In terms of assembly, homodimer.

It functions in the pathway secondary metabolite biosynthesis; terpenoid biosynthesis. Functionally, methyltransferase; part of the gene cluster that mediates the biosynthesis of terretonin, a fungal meroterpenoid that acts as a mycotoxin. The first step of the pathway is the synthesis of 3,5-dimethylorsellinic acid (DMOA) by the polyketide synthase trt4. DMOA is then prenylated into farnesyl-DMOA by the polyprenyl transferase trt2. Methylation by the methyltransferase trt5 then leads to farnesyl-DMOA methyl ester which is further subject to epoxidation by the FAD-dependent monooxygenase trt8 to yield epoxyfarnesyl-DMOA methyl ester. Cyclization of epoxyfarnesyl-DMOA methyl ester by the terpene cyclase trt1 leads to a tetracycle intermediate which is in turn converted to preterretonin. Dehydrogenase trt9 comes next to transform preterretonin to preterrenoid. The FAD-dependent monooxygenase trt3 is then required for the C-hydroxylation at C16 of preterrenoid to yield terrenoid. The cytochrome P450 trt6 catalyzes three successive oxidations to transform terrenoid into an unstable intermediate, which then undergoes the D-ring expansion and unusual rearrangement of the methoxy group to afford the core skeleton of terretonin. Trt14 catalyzes the D-ring expansion of terretonin involving intramolecular methoxy rearrangement as well as the hydrolysis of the expanded D-ring and the methyl ester moiety. Finally, the nonheme iron-dependent dioxygenase trt7 accomplishes the last two oxidation reactions steps to complete the biosynthesis of terretonin. Terretonin C is produced via spontaneous decarboxylation of the terretonin precursor. Another shunt product of the terretonin biosynthesis is dihydrofarnesyl-DMOA, derived from epoxyfarnesyl-DMOA through hydrolysis of the epoxide. In Aspergillus terreus (strain NIH 2624 / FGSC A1156), this protein is Methyltransferase trt5.